The sequence spans 413 residues: Phosphopentomutase (413 aa).

The Mn(2+) site is built by D11, D306, H311, D347, H348, and H359.

This sequence belongs to the phosphopentomutase family. Mn(2+) is required as a cofactor.

The protein localises to the cytoplasm. The enzyme catalyses 2-deoxy-alpha-D-ribose 1-phosphate = 2-deoxy-D-ribose 5-phosphate. It carries out the reaction alpha-D-ribose 1-phosphate = D-ribose 5-phosphate. It participates in carbohydrate degradation; 2-deoxy-D-ribose 1-phosphate degradation; D-glyceraldehyde 3-phosphate and acetaldehyde from 2-deoxy-alpha-D-ribose 1-phosphate: step 1/2. Isomerase that catalyzes the conversion of deoxy-ribose 1-phosphate (dRib-1-P) and ribose 1-phosphate (Rib-1-P) to deoxy-ribose 5-phosphate (dRib-5-P) and ribose 5-phosphate (Rib-5-P), respectively. The protein is Phosphopentomutase of Helicobacter acinonychis (strain Sheeba).